A 321-amino-acid chain; its full sequence is Ribose-phosphate pyrophosphokinase (321 aa).

ATP is bound by residues 44 to 46 and 103 to 104; these read DGE and RQ. 2 residues coordinate Mg(2+): His137 and Asp179. The active site involves Lys202. D-ribose 5-phosphate is bound by residues Arg204, Asp228, and 232 to 236; that span reads DTAGT.

The protein belongs to the ribose-phosphate pyrophosphokinase family. Class I subfamily. Homohexamer. Mg(2+) is required as a cofactor.

The protein localises to the cytoplasm. It carries out the reaction D-ribose 5-phosphate + ATP = 5-phospho-alpha-D-ribose 1-diphosphate + AMP + H(+). It functions in the pathway metabolic intermediate biosynthesis; 5-phospho-alpha-D-ribose 1-diphosphate biosynthesis; 5-phospho-alpha-D-ribose 1-diphosphate from D-ribose 5-phosphate (route I): step 1/1. Its function is as follows. Involved in the biosynthesis of the central metabolite phospho-alpha-D-ribosyl-1-pyrophosphate (PRPP) via the transfer of pyrophosphoryl group from ATP to 1-hydroxyl of ribose-5-phosphate (Rib-5-P). In Staphylococcus epidermidis (strain ATCC 35984 / DSM 28319 / BCRC 17069 / CCUG 31568 / BM 3577 / RP62A), this protein is Ribose-phosphate pyrophosphokinase.